We begin with the raw amino-acid sequence, 446 residues long: Na(+)-translocating NADH-quinone reductase subunit A (446 aa).

Belongs to the NqrA family. In terms of assembly, composed of six subunits; NqrA, NqrB, NqrC, NqrD, NqrE and NqrF.

The catalysed reaction is a ubiquinone + n Na(+)(in) + NADH + H(+) = a ubiquinol + n Na(+)(out) + NAD(+). In terms of biological role, NQR complex catalyzes the reduction of ubiquinone-1 to ubiquinol by two successive reactions, coupled with the transport of Na(+) ions from the cytoplasm to the periplasm. NqrA to NqrE are probably involved in the second step, the conversion of ubisemiquinone to ubiquinol. This is Na(+)-translocating NADH-quinone reductase subunit A from Psychromonas ingrahamii (strain DSM 17664 / CCUG 51855 / 37).